We begin with the raw amino-acid sequence, 298 residues long: Probable GTP 3',8-cyclase (298 aa).

The Radical SAM core domain maps to 4-227; that stretch reads RYGREIRSFR…MQNRKKYLID (224 aa). R13 serves as a coordination point for GTP. [4Fe-4S] cluster contacts are provided by C20 and C24. Y26 is an S-adenosyl-L-methionine binding site. Position 27 (C27) interacts with [4Fe-4S] cluster. K61 lines the GTP pocket. G65 provides a ligand contact to S-adenosyl-L-methionine. Residue T91 participates in GTP binding. Residue S115 coordinates S-adenosyl-L-methionine. Residue K152 coordinates GTP. [4Fe-4S] cluster is bound by residues C243 and C246. 248-250 is a GTP binding site; sequence RIR. C260 contributes to the [4Fe-4S] cluster binding site.

This sequence belongs to the radical SAM superfamily. MoaA family. It depends on [4Fe-4S] cluster as a cofactor.

It carries out the reaction GTP + AH2 + S-adenosyl-L-methionine = (8S)-3',8-cyclo-7,8-dihydroguanosine 5'-triphosphate + 5'-deoxyadenosine + L-methionine + A + H(+). Its pathway is cofactor biosynthesis; molybdopterin biosynthesis. Its function is as follows. Catalyzes the cyclization of GTP to (8S)-3',8-cyclo-7,8-dihydroguanosine 5'-triphosphate. This is Probable GTP 3',8-cyclase from Methanococcus maripaludis (strain C5 / ATCC BAA-1333).